Here is a 161-residue protein sequence, read N- to C-terminus: S-ribosylhomocysteine lyase (161 aa).

H57, H61, and C127 together coordinate Fe cation.

It belongs to the LuxS family. In terms of assembly, homodimer. Fe cation is required as a cofactor.

The enzyme catalyses S-(5-deoxy-D-ribos-5-yl)-L-homocysteine = (S)-4,5-dihydroxypentane-2,3-dione + L-homocysteine. Functionally, involved in the synthesis of autoinducer 2 (AI-2) which is secreted by bacteria and is used to communicate both the cell density and the metabolic potential of the environment. The regulation of gene expression in response to changes in cell density is called quorum sensing. Catalyzes the transformation of S-ribosylhomocysteine (RHC) to homocysteine (HC) and 4,5-dihydroxy-2,3-pentadione (DPD). In Streptococcus equi subsp. zooepidemicus (strain H70), this protein is S-ribosylhomocysteine lyase.